Here is a 402-residue protein sequence, read N- to C-terminus: uncharacterized protein (402 aa).

Helical transmembrane passes span 13–33 (IGVL…VNLA), 68–88 (FFIQ…GMVV), 108–128 (LMAL…GDIL), 149–169 (LLIW…LTSF), 223–243 (LNYF…AAAA), 261–281 (LWMA…VTDK), 283–303 (ICLL…VVYL), 327–347 (YLMQ…GLYG), and 353–373 (AGVL…HLWL).

It localises to the cell membrane. In terms of biological role, involved in transport. This is an uncharacterized protein from Bacillus subtilis (strain 168).